Here is a 283-residue protein sequence, read N- to C-terminus: Homeobox protein Hox-C12b (283 aa).

A DNA-binding region (homeobox) is located at residues 215–274; the sequence is TRKKRKPYSKLQLNELEGEFILNEFITRQRRRELSDRLNLTDQQVKIWFQNRRMKKKRLL.

Belongs to the Abd-B homeobox family.

It is found in the nucleus. Functionally, sequence-specific transcription factor which is part of a developmental regulatory system that provides cells with specific positional identities on the anterior-posterior axis. The polypeptide is Homeobox protein Hox-C12b (hoxc12b) (Danio rerio (Zebrafish)).